Here is a 780-residue protein sequence, read N- to C-terminus: Dynamin-related protein 3B (780 aa).

At S2 the chain carries N-acetylserine. The region spanning 40–315 (TIALPQVAVV…LVQHIKALLP (276 aa)) is the Dynamin-type G domain. The tract at residues 50–57 (GSQSSGKS) is G1 motif. Residue 50-57 (GSQSSGKS) coordinates GTP. Residues 76-78 (CTR) are G2 motif. Residues 157–160 (DLPG) are G3 motif. Residues 157 to 161 (DLPGI) and 226 to 229 (TKLD) contribute to the GTP site. Residues 226–229 (TKLD) form a G4 motif region. The G5 motif stretch occupies residues 256 to 259 (VNRS). 2 disordered regions span residues 536 to 558 (PVAR…QIKT) and 573 to 592 (QAVP…STSW). Positions 539–548 (RPRDTVEPER) are enriched in basic and acidic residues. Residues 549 to 558 (TASSGSQIKT) are compositionally biased toward polar residues. The 92-residue stretch at 654 to 745 (IEITKLLLKS…TLDELPLEAE (92 aa)) folds into the GED domain. Basic and acidic residues predominate over residues 753-770 (IGSEAKHEELPGTRRSRT). Residues 753–780 (IGSEAKHEELPGTRRSRTETNGNGRLHM) are disordered. Polar residues predominate over residues 771-780 (ETNGNGRLHM).

Belongs to the TRAFAC class dynamin-like GTPase superfamily. Dynamin/Fzo/YdjA family. Interacts with ARC5 on peroxisomes and ELM1 on mitochondria.

It localises to the mitochondrion. Its subcellular location is the peroxisome. In terms of biological role, involved in the control of mitochondrial and peroxisomal division and morphology. This Arabidopsis thaliana (Mouse-ear cress) protein is Dynamin-related protein 3B (DRP3B).